Consider the following 302-residue polypeptide: Putative S-adenosyl-L-methionine-dependent methyltransferase MRA_0290 (302 aa).

S-adenosyl-L-methionine-binding positions include Asp-126 and 155 to 156 (DL).

Belongs to the UPF0677 family.

In terms of biological role, exhibits S-adenosyl-L-methionine-dependent methyltransferase activity. The polypeptide is Putative S-adenosyl-L-methionine-dependent methyltransferase MRA_0290 (Mycobacterium tuberculosis (strain ATCC 25177 / H37Ra)).